A 126-amino-acid chain; its full sequence is SNRPMPLNLYQFKNMIQCTVPSRSWQDFADYGCYCGKGGSGTPVDDLDRCCQVHDNCYNEAENISGCRPYFKTYSYECTQGTLTCKGDNNACAASVCDCDRLAAICFAGAPYNDANYNIDLKARCN.

Residues 1–7 (SNRPMPL) constitute a propeptide that is removed on maturation. 7 disulfides stabilise this stretch: C18/C78, C33/C125, C35/C51, C50/C106, C57/C99, C67/C92, and C85/C97. Ca(2+) is bound by residues Y34, G36, and G38. Residue H54 is part of the active site. D55 provides a ligand contact to Ca(2+). The active site involves D100.

It belongs to the phospholipase A2 family. Group I subfamily. D49 sub-subfamily. It depends on Ca(2+) as a cofactor. In terms of tissue distribution, expressed by the venom gland.

Its subcellular location is the secreted. It catalyses the reaction a 1,2-diacyl-sn-glycero-3-phosphocholine + H2O = a 1-acyl-sn-glycero-3-phosphocholine + a fatty acid + H(+). Functionally, PLA2 catalyzes the calcium-dependent hydrolysis of the 2-acyl groups in 3-sn-phosphoglycerides. The polypeptide is Acidic phospholipase A2 3 (Naja sagittifera (Andaman cobra)).